We begin with the raw amino-acid sequence, 106 residues long: ATP-dependent Clp protease adapter protein ClpS (106 aa).

This sequence belongs to the ClpS family. Binds to the N-terminal domain of the chaperone ClpA.

In terms of biological role, involved in the modulation of the specificity of the ClpAP-mediated ATP-dependent protein degradation. In Serratia proteamaculans (strain 568), this protein is ATP-dependent Clp protease adapter protein ClpS.